The primary structure comprises 171 residues: Tetratricopeptide repeat protein 9C (171 aa).

TPR repeat units follow at residues 8–41 (AQLY…LRGL), 72–107 (TDCY…QPDN), and 108–141 (AKAL…QPKD).

The protein belongs to the TTC9 family.

The polypeptide is Tetratricopeptide repeat protein 9C (TTC9C) (Homo sapiens (Human)).